We begin with the raw amino-acid sequence, 230 residues long: Large ribosomal subunit protein uL1 (230 aa).

This sequence belongs to the universal ribosomal protein uL1 family. As to quaternary structure, part of the 50S ribosomal subunit.

Functionally, binds directly to 23S rRNA. The L1 stalk is quite mobile in the ribosome, and is involved in E site tRNA release. Protein L1 is also a translational repressor protein, it controls the translation of the L11 operon by binding to its mRNA. This Erythrobacter litoralis (strain HTCC2594) protein is Large ribosomal subunit protein uL1.